We begin with the raw amino-acid sequence, 587 residues long: Kelch-like protein 3 (587 aa).

The interval 1–22 (MDGESIKPSSQPLIQTGDDEKN) is disordered. Serine 10 bears the Phosphoserine mark. The 68-residue stretch at 50–117 (CDVMIVAEDV…IYTAEIEVTE (68 aa)) folds into the BTB domain. One can recognise a BACK domain in the interval 152-254 (CLGIRAFADV…PRDYLVQTVE (103 aa)). Threonine 295 bears the Phosphothreonine mark. Kelch repeat units follow at residues 302 to 347 (VMIV…FMAG), 348 to 394 (HVYA…VLND), 396 to 441 (LYAV…VVEG), 442 to 490 (KLYA…VLSG), 491 to 537 (QLYA…AVNG), and 539 to 585 (LYVV…VIHK). Threonine 375 carries the phosphothreonine modification. 2 positions are modified to phosphoserine: serine 376 and serine 433.

It belongs to the KLHL3 family. In terms of assembly, homodimer. Component of the BCR(KLHL3) E3 ubiquitin ligase complex, at least composed of CUL3 and KLHL3 and RBX1. Interacts with CLDN8. Phosphorylation at Ser-433 by PKA or PKC decreases the interaction with WNK1 and WNK4, leading to inhibit their degradation by the BCR(KLHL3) complex. Phosphorylated at Ser-433 by PKC in response to angiotensin II signaling, decreasing ability to promote degradation of WNK1 and WNK4, leading to activation of Na-Cl cotransporter SLC12A3/NCC. Phosphorylation at Ser-433 is increased by insulin. Dephosphorylated at Ser-433 by calcineurin PPP3CA, promoting degradation of WNK1 and WNK4.

The protein localises to the cytoplasm. It is found in the cytoskeleton. The protein resides in the cytosol. It participates in protein modification; protein ubiquitination. Its function is as follows. Substrate-specific adapter of a BCR (BTB-CUL3-RBX1) E3 ubiquitin ligase complex that acts as a regulator of ion transport in the distal nephron. The BCR(KLHL3) complex acts by mediating ubiquitination and degradation of WNK1 and WNK4, two activators of Na-Cl cotransporter SLC12A3/NCC in distal convoluted tubule cells of kidney, thereby regulating NaCl reabsorption. The BCR(KLHL3) complex also mediates ubiquitination and degradation of WNK3. The BCR(KLHL3) complex also mediates ubiquitination of CLDN8, a tight-junction protein required for paracellular chloride transport in the kidney, leading to its degradation. The chain is Kelch-like protein 3 (KLHL3) from Bos taurus (Bovine).